Consider the following 343-residue polypeptide: Thromboxane A2 receptor (343 aa).

At 1 to 29 the chain is on the extracellular side; that stretch reads MWPNGSSLGPCFRPTNITLEERRLIASPW. N-linked (GlcNAc...) asparagine glycosylation is found at Asn-4 and Asn-16. A helical membrane pass occupies residues 30 to 52; sequence FAASFCVVGLASNLLALSVLAGA. The Cytoplasmic segment spans residues 53 to 66; that stretch reads RQGGSHTRSSFLTF. Residues 67 to 87 form a helical membrane-spanning segment; that stretch reads LCGLVLTDFLGLLVTGAIVVS. At 88–106 the chain is on the extracellular side; that stretch reads QHAALFEWHAVDPGCRLCR. A disulfide bridge links Cys-105 with Cys-183. Residues 107-128 traverse the membrane as a helical segment; the sequence is FMGVVMIFFGLSPLLLGATMAS. Topologically, residues 129-149 are cytoplasmic; that stretch reads ERFLGITRPFSRPVVTSQRRA. The chain crosses the membrane as a helical span at residues 150–172; it reads WATVGLVWAAALALGLLPLLGLG. Residues 173–193 are Extracellular-facing; sequence RYTVQYPGSWCFLTLGAESGD. The helical transmembrane segment at 194 to 219 threads the bilayer; the sequence is VAFGLLFSMLGGLSVGLSFLLNTVSV. Residues 220–246 lie on the Cytoplasmic side of the membrane; that stretch reads ATLCHVYHGQEAAQQRPRDSEVEMMAQ. The chain crosses the membrane as a helical span at residues 247–270; that stretch reads LLGIMLVASVCWLPLLVFIAQTVL. At 271 to 289 the chain is on the extracellular side; it reads RNPPAMSPSGQLSRATEQE. The chain crosses the membrane as a helical span at residues 290–311; that stretch reads LLIYLRVATWNQILDPWVYILF. Residues 312-343 lie on the Cytoplasmic side of the membrane; it reads RRAVLRRLQPRLSTRPRSLSLQPQLTQRSGLQ. Residues Ser-329 and Ser-331 each carry the phosphoserine modification.

Belongs to the G-protein coupled receptor 1 family. In terms of assembly, interacts with RPGRIP1L. Interacts with RACK1; the interaction regulates TBXA2R cell surface expression.

Its subcellular location is the cell membrane. In terms of biological role, receptor for thromboxane A2 (TXA2), a potent stimulator of platelet aggregation. The activity of this receptor is mediated by a G-protein that activates a phosphatidylinositol-calcium second messenger system. In the kidney, the binding of TXA2 to glomerular TP receptors causes intense vasoconstriction. Activates phospholipase C and adenylyl cyclase. In Chlorocebus aethiops (Green monkey), this protein is Thromboxane A2 receptor (TBXA2R).